Here is a 258-residue protein sequence, read N- to C-terminus: Pyridoxal phosphate homeostasis protein (258 aa).

Lysine 47 bears the N6-(pyridoxal phosphate)lysine mark.

Belongs to the pyridoxal phosphate-binding protein YggS/PROSC family.

Its function is as follows. Pyridoxal 5'-phosphate (PLP)-binding protein, which is involved in PLP homeostasis. The polypeptide is Pyridoxal phosphate homeostasis protein (Mycobacterium bovis (strain ATCC BAA-935 / AF2122/97)).